The chain runs to 398 residues: Arylacetamide deacetylase (398 aa).

Over 1-5 (MGRTI) the chain is Cytoplasmic. A helical; Signal-anchor for type II membrane protein membrane pass occupies residues 6–26 (FLLISVVLVAYYIYIPLPDDI). Over 27 to 398 (EEPWKIILGN…QYLNWLHKNL (372 aa)) the chain is Lumenal. An N-linked (GlcNAc...) asparagine glycan is attached at N77. An Involved in the stabilization of the negatively charged intermediate by the formation of the oxyanion hole motif is present at residues 110 to 112 (HGG). A disulfide bridge connects residues C115 and C339. The active site involves S188. Residues N192, N281, and N324 are each glycosylated (N-linked (GlcNAc...) asparagine). Residues D342 and H372 contribute to the active site.

Belongs to the 'GDXG' lipolytic enzyme family. In terms of tissue distribution, highest levels in liver with lower levels in jejunum, kidney and testis.

The protein localises to the endoplasmic reticulum membrane. It localises to the microsome membrane. It carries out the reaction a triacylglycerol + H2O = a diacylglycerol + a fatty acid + H(+). Displays cellular triglyceride lipase activity in liver, increases the levels of intracellular fatty acids derived from the hydrolysis of newly formed triglyceride stores and plays a role in very low-density lipoprotein assembly. Displays serine esterase activity in liver. Deacetylates a variety of arylacetamide substrates, including xenobiotic compounds and procarcinogens, converting them to the primary arylamide compounds and increasing their toxicity. The sequence is that of Arylacetamide deacetylase (Aadac) from Rattus norvegicus (Rat).